A 115-amino-acid polypeptide reads, in one-letter code: Nucleoid-associated protein NATL1_00191 (115 aa).

The interval 89 to 115 is disordered; sequence STSTMKERMEDLTGGFKLNLPGMGEES.

Belongs to the YbaB/EbfC family. As to quaternary structure, homodimer.

The protein localises to the cytoplasm. It is found in the nucleoid. Binds to DNA and alters its conformation. May be involved in regulation of gene expression, nucleoid organization and DNA protection. This Prochlorococcus marinus (strain NATL1A) protein is Nucleoid-associated protein NATL1_00191.